Consider the following 537-residue polypeptide: Cytochrome P450 monooxygenase claR (537 aa).

The helical transmembrane segment at valine 23 to isoleucine 43 threads the bilayer. Cysteine 454 contacts heme.

The protein belongs to the cytochrome P450 family. Requires heme as cofactor.

The protein localises to the membrane. It carries out the reaction (2E)-geranylhydroquinone + reduced [NADPH--hemoprotein reductase] + O2 = wigandol + oxidized [NADPH--hemoprotein reductase] + 2 H2O + H(+). It functions in the pathway secondary metabolite biosynthesis; terpenoid biosynthesis. Functionally, cytochrome P450 monooxygenase; part of the gene cluster that mediates the biosynthesis of clavilactone A, a meroterpenoid that features a unique benzo-fused ten-membered carbocyclic ring unit with an alpha,beta-epoxy-gamma-lactone moiety, forming an intriguing 10/5/3 tricyclic nested skeleton. ClaR, ClaS and ClaT are sufficient to produce clavilactone A. ClaR acts as a macrocyclase to catalyze the oxidative cyclization of the isopentenyl to the nonterpenoid moieties to form the benzo-fused macrocycle, leading to wigantol. The biosynthesis begins with the prenyltransferase claS that transfers geranyl pyrophosphate (GPP) to hydroquinone to produces geranylhydroquinone. The cytochrome P450 monooxygenase claR then catalyzes the diradical coupling reaction between the intramolecular hydroquinone and allyl moieties to form the benzo-fused ten-membered carbocyclic ring unit of wigantol. Finally the cytochrome P450 monooxygenase claT exquisitely and stereoselectively assembles the alpha,beta-epoxy-gamma-lactone moiety, producing clavilactone A via arnebinol A. This Ampulloclitocybe clavipes (Club foot) protein is Cytochrome P450 monooxygenase claR.